An 88-amino-acid chain; its full sequence is Large ribosomal subunit protein bL31B (88 aa).

This sequence belongs to the bacterial ribosomal protein bL31 family. Type B subfamily. In terms of assembly, part of the 50S ribosomal subunit.

This Corynebacterium efficiens (strain DSM 44549 / YS-314 / AJ 12310 / JCM 11189 / NBRC 100395) protein is Large ribosomal subunit protein bL31B.